Here is a 37-residue protein sequence, read N- to C-terminus: Cytochrome b6-f complex subunit 7 (37 aa).

Residues Ala-11 to Leu-29 traverse the membrane as a helical segment.

It belongs to the PetM family. In terms of assembly, the 4 large subunits of the cytochrome b6-f complex are cytochrome b6, subunit IV (17 kDa polypeptide, PetD), cytochrome f and the Rieske protein, while the 4 small subunits are PetG, PetL, PetM and PetN. The complex functions as a dimer.

The protein localises to the cellular thylakoid membrane. Functionally, component of the cytochrome b6-f complex, which mediates electron transfer between photosystem II (PSII) and photosystem I (PSI), cyclic electron flow around PSI, and state transitions. The polypeptide is Cytochrome b6-f complex subunit 7 (Gloeothece citriformis (strain PCC 7424) (Cyanothece sp. (strain PCC 7424))).